The chain runs to 446 residues: Zinc finger protein BALDIBIS (446 aa).

The disordered stretch occupies residues 20 to 53; it reads EHIAPNPNPNPNPTSSNSAKRKRNLPGNPDPDAE. Ser58 carries the post-translational modification Phosphoserine. 2 consecutive C2H2-type zinc fingers follow at residues 68-90 and 110-140; these read FICEVCNKGFKRDQNLQLHRRGH and YICPEKTCVHHDPARALGDLTGIKKHFSRKH. The Nuclear localization signal signature appears at 132–139; that stretch reads IKKHFSRK. Residues 145–168 form a C2H2-type 2; degenerate zinc finger; sequence WKCDKCSKKYAVMSDWKAHSKICG. Residues Cys147, Cys150, His163, Cys167, Cys174, Cys176, His189, and Cys193 each coordinate Zn(2+). The CCHC-type 2; atypical zinc finger occupies 172-195; that stretch reads YRCDCGTLFSRKDSFITHRAFCDA. The segment at 182-194 is SHR-binding; the sequence is RKDSFITHRAFCD. The tract at residues 425–446 is disordered; that stretch reads HNLPDSSPPASTDGTPTADMNQ. Positions 427 to 446 are enriched in polar residues; the sequence is LPDSSPPASTDGTPTADMNQ.

As to quaternary structure, binds to RGA and SCL3 competitively in the nucleus. As to expression, expressed in roots, especially in vascular initials, cortex, endodermis, and quiescent center (QC).

It localises to the nucleus. Transcription factor that, together with JKD, regulates tissue boundaries and asymmetric cell division in roots by a rapid up-regulation of 'SCARECROW' (SCR), thus controlling the nuclear localization of 'SHORT-ROOT' (SHR) and restricting its action. Confines CYCD6 expression to the cortex-endodermis initial/daughter (CEI/CEID) tissues. Binds DNA via its zinc fingers. Recognizes and binds to SCL3 promoter sequence 5'-AGACAA-3' to promote its expression when in complex with RGA. The sequence is that of Zinc finger protein BALDIBIS from Arabidopsis thaliana (Mouse-ear cress).